The sequence spans 194 residues: MPRLILASTSPWRRALLEKLTIPFECAAPDVDETPMPGEAPRQLVLRLAQAKAQSLAARFPNHLIIGSDQICVLDGEITGKPLTEEKARQQLAKASGNIVTFYTGLALYNSASGHLQTEVEPFDVHFRHLSEAEIDDYVRKEHPLHCAGSFKSEGLGIALFERLEGRDPNTLIGLPLIALCQMLRREGFNPLQQ.

Catalysis depends on Asp-69, which acts as the Proton acceptor.

The protein belongs to the Maf family. YceF subfamily. Requires a divalent metal cation as cofactor.

The protein localises to the cytoplasm. It carries out the reaction N(7)-methyl-GTP + H2O = N(7)-methyl-GMP + diphosphate + H(+). Nucleoside triphosphate pyrophosphatase that hydrolyzes 7-methyl-GTP (m(7)GTP). May have a dual role in cell division arrest and in preventing the incorporation of modified nucleotides into cellular nucleic acids. This Salmonella typhimurium (strain LT2 / SGSC1412 / ATCC 700720) protein is 7-methyl-GTP pyrophosphatase (yceF).